We begin with the raw amino-acid sequence, 497 residues long: MDARLTVLTAFPPAAGIDNEEYYQNSQQHAKRVRELVRDNAQWIRESADDILKHVNPAVYSLSYLMILEFLLQSPGWTSQQAHESLASYMAQFFLQFDARQIRCKGSTWSDVLKEAYSERGLFPASVAVELVTAALLRLDPSGSIITSHHCNLVELAYNTGNVGALLPLIEKPIIYMPAKGMSTAQPLCDMSLPPPAYINPDSQLTDALTSAAVLQYDFLCGLCFIERRMWQQAFDAFERCVTYPTRDGGCSKIMTEAYNKWILVGLLLTGKPPTLPETTSQAAKKIFATQGKPYKLFAQAFKSETAGDLVREFEVINSELLPNEGNVELAKLVLAHYQRWQIINLRNIYTNISLEKIQERTQSAETGAPLPTVEAVDQLVQSMIADGSLQGAIERPKDGSPAYLTFLSSPAQGMSEVEFSAQVNKVMQGIKALEPIIEATNKRLASNREYISHTVKRQFDAAREHKLGLQSAGGGFEESSFHIEEEEDLMSGLPAH.

The PCI domain maps to 233-408 (QAFDAFERCV…DGSPAYLTFL (176 aa)).

This sequence belongs to the CSN3 family. In terms of assembly, component of the COP9 signalosome (CSN) complex.

It is found in the cytoplasm. The protein resides in the nucleus. In terms of biological role, component of the COP9 signalosome (CSN) complex that acts as an regulator of the ubiquitin (Ubl) conjugation pathway by mediating the deneddylation of the cullin subunit of SCF-type E3 ubiquitin-protein ligase complexes. The CSN complex is involved in the regulation of the circadian clock through its control of the stability of the SCF(FWD1) complex. The chain is COP9 signalosome complex subunit 3 (csn-3) from Neurospora crassa (strain ATCC 24698 / 74-OR23-1A / CBS 708.71 / DSM 1257 / FGSC 987).